Reading from the N-terminus, the 151-residue chain is Ribosome maturation factor RimP (151 aa).

This sequence belongs to the RimP family.

The protein localises to the cytoplasm. Required for maturation of 30S ribosomal subunits. This Crocosphaera subtropica (strain ATCC 51142 / BH68) (Cyanothece sp. (strain ATCC 51142)) protein is Ribosome maturation factor RimP.